A 147-amino-acid chain; its full sequence is Hemoglobin subunit beta (147 aa).

Residue Val-2 is modified to N-acetylvaline. The 145-residue stretch at 3 to 147 (NLTSDEKTAV…VANALAHKYH (145 aa)) folds into the Globin domain. At Ser-45 the chain carries Phosphoserine. The residue at position 60 (Lys-60) is an N6-acetyllysine. Heme b is bound at residue His-64. Lys-83 is modified (N6-acetyllysine). His-93 lines the heme b pocket. Position 94 is an S-nitrosocysteine (Cys-94). Lys-145 bears the N6-acetyllysine mark.

Belongs to the globin family. Heterotetramer of two alpha chains and two beta chains. In terms of tissue distribution, red blood cells.

Functionally, involved in oxygen transport from the lung to the various peripheral tissues. This is Hemoglobin subunit beta (HBB) from Dasypus novemcinctus (Nine-banded armadillo).